We begin with the raw amino-acid sequence, 680 residues long: tRNA 5-methylaminomethyl-2-thiouridine biosynthesis bifunctional protein MnmC (680 aa).

The tract at residues 1–251 (MSQNHILPQN…KREMIAGTLT (251 aa)) is tRNA (mnm(5)s(2)U34)-methyltransferase. The segment at 277-680 (IGGGVASAAL…RLLKGKPLDI (404 aa)) is FAD-dependent cmnm(5)s(2)U34 oxidoreductase.

The protein in the N-terminal section; belongs to the methyltransferase superfamily. tRNA (mnm(5)s(2)U34)-methyltransferase family. It in the C-terminal section; belongs to the DAO family. FAD is required as a cofactor.

It localises to the cytoplasm. The enzyme catalyses 5-aminomethyl-2-thiouridine(34) in tRNA + S-adenosyl-L-methionine = 5-methylaminomethyl-2-thiouridine(34) in tRNA + S-adenosyl-L-homocysteine + H(+). Its function is as follows. Catalyzes the last two steps in the biosynthesis of 5-methylaminomethyl-2-thiouridine (mnm(5)s(2)U) at the wobble position (U34) in tRNA. Catalyzes the FAD-dependent demodification of cmnm(5)s(2)U34 to nm(5)s(2)U34, followed by the transfer of a methyl group from S-adenosyl-L-methionine to nm(5)s(2)U34, to form mnm(5)s(2)U34. The protein is tRNA 5-methylaminomethyl-2-thiouridine biosynthesis bifunctional protein MnmC of Aliivibrio fischeri (strain ATCC 700601 / ES114) (Vibrio fischeri).